A 139-amino-acid polypeptide reads, in one-letter code: ATP synthase epsilon chain (139 aa).

Residues 89–110 (EARAEQARAEAEARRREAQSER) form a disordered region.

It belongs to the ATPase epsilon chain family. In terms of assembly, F-type ATPases have 2 components, CF(1) - the catalytic core - and CF(0) - the membrane proton channel. CF(1) has five subunits: alpha(3), beta(3), gamma(1), delta(1), epsilon(1). CF(0) has three main subunits: a, b and c.

The protein resides in the cell membrane. In terms of biological role, produces ATP from ADP in the presence of a proton gradient across the membrane. The chain is ATP synthase epsilon chain from Chloroflexus aurantiacus (strain ATCC 29366 / DSM 635 / J-10-fl).